Here is a 157-residue protein sequence, read N- to C-terminus: Major allergen Alt a 1 (157 aa).

The first 18 residues, 1–18 (MQFTTIASLFAAAGLAAA), serve as a signal peptide directing secretion. In terms of domain architecture, AA1-like spans 35 to 153 (EGDYVWKISE…ADAYITLVTL (119 aa)). Disulfide bonds link cysteine 74–cysteine 89 and cysteine 128–cysteine 140.

The protein belongs to the ALTA1 family. In terms of assembly, homodimer; disulfide-linked.

Its subcellular location is the spore wall. The protein localises to the secreted. In terms of biological role, may bind and inhibit the beta-glucanase activity of host plant thaumatin-like proteins. This chain is Major allergen Alt a 1 (ALTA1), found in Alternaria alternata (Alternaria rot fungus).